The chain runs to 160 residues: Large ribosomal subunit protein eL21A (160 aa).

K32 participates in a covalent cross-link: Glycyl lysine isopeptide (Lys-Gly) (interchain with G-Cter in ubiquitin).

This sequence belongs to the eukaryotic ribosomal protein eL21 family. Component of the large ribosomal subunit (LSU). Mature yeast ribosomes consist of a small (40S) and a large (60S) subunit. The 40S small subunit contains 1 molecule of ribosomal RNA (18S rRNA) and 33 different proteins (encoded by 57 genes). The large 60S subunit contains 3 rRNA molecules (25S, 5.8S and 5S rRNA) and 46 different proteins (encoded by 81 genes).

Its subcellular location is the cytoplasm. In terms of biological role, component of the ribosome, a large ribonucleoprotein complex responsible for the synthesis of proteins in the cell. The small ribosomal subunit (SSU) binds messenger RNAs (mRNAs) and translates the encoded message by selecting cognate aminoacyl-transfer RNA (tRNA) molecules. The large subunit (LSU) contains the ribosomal catalytic site termed the peptidyl transferase center (PTC), which catalyzes the formation of peptide bonds, thereby polymerizing the amino acids delivered by tRNAs into a polypeptide chain. The nascent polypeptides leave the ribosome through a tunnel in the LSU and interact with protein factors that function in enzymatic processing, targeting, and the membrane insertion of nascent chains at the exit of the ribosomal tunnel. This is Large ribosomal subunit protein eL21A from Saccharomyces cerevisiae (strain ATCC 204508 / S288c) (Baker's yeast).